A 495-amino-acid chain; its full sequence is Glycerol kinase (495 aa).

Thr11 lines the ADP pocket. Thr11, Thr12, and Ser13 together coordinate ATP. Thr11 is a binding site for sn-glycerol 3-phosphate. Arg15 provides a ligand contact to ADP. Arg81, Glu82, Tyr133, and Asp242 together coordinate sn-glycerol 3-phosphate. The glycerol site is built by Arg81, Glu82, Tyr133, Asp242, and Gln243. Residues Thr264 and Gly307 each contribute to the ADP site. Positions 264, 307, 311, and 410 each coordinate ATP. Gly410 contributes to the ADP binding site.

This sequence belongs to the FGGY kinase family.

The catalysed reaction is glycerol + ATP = sn-glycerol 3-phosphate + ADP + H(+). It functions in the pathway polyol metabolism; glycerol degradation via glycerol kinase pathway; sn-glycerol 3-phosphate from glycerol: step 1/1. Its activity is regulated as follows. Inhibited by fructose 1,6-bisphosphate (FBP). Key enzyme in the regulation of glycerol uptake and metabolism. Catalyzes the phosphorylation of glycerol to yield sn-glycerol 3-phosphate. This chain is Glycerol kinase, found in Roseobacter denitrificans (strain ATCC 33942 / OCh 114) (Erythrobacter sp. (strain OCh 114)).